Here is a 507-residue protein sequence, read N- to C-terminus: Protein FAM221B (507 aa).

Disordered stretches follow at residues 1–100 (MEAD…SAQS), 154–310 (LLSP…ESRP), and 486–507 (ETKR…HRPF). Polar residues predominate over residues 88–100 (NLPSTPSQSSAQS). The segment covering 167–177 (SISDVQEEPLE) has biased composition (acidic residues). Over residues 182–193 (ADISETEYSISD) the composition is skewed to polar residues. 2 stretches are compositionally biased toward acidic residues: residues 208–222 (PESE…EEPL) and 270–281 (SADEEEAEEEEL). Ser-270 is subject to Phosphoserine.

It belongs to the FAM221 family.

This chain is Protein FAM221B (Fam221b), found in Rattus norvegicus (Rat).